A 658-amino-acid polypeptide reads, in one-letter code: MVPRLLLRAWPRGPAVGPGAPSRPLSAGSGPGQYLQRSIVPTMHYQDSLPRLPIPKLEDTIRRYLSAQKPLLNDGQFRKTEQFCKSFENGIGKELHEQLVALDKQNKHTSYISGPWFDMYLSARDSVVLNFNPFMAFNPDPKSEYNDQLTRATNMTVSAIRFLKTLRAGLLEPEVFHLNPAKSDTITFKRLIRFVPSSLSWYGAYLVNAYPLDMSQYFRLFNSTRLPKPSRDELFTDDKARHLLVLRKGNFYIFDVLDQDGNIVSPSEIQAHLKYILSDSSPAPEFPLAYLTSENRDIWAELRQKLMSSGNEESLRKVDSAVFCLCLDDFPIKDLVHLSHNMLHGDGTNRWFDKSFNLIIAKDGSTAVHFEHSWGDGVAVLRFFNEVFKDSTQTPAVTPQSQPATTDSTVTVQKLNFELTDALKTGITAAKEKFDATMKTLTIDCVQFQRGGKEFLKKQKLSPDAVAQLAFQMAFLRQYGQTVATYESCSTAAFKHGRTETIRPASVYTKRCSEAFVREPSRHSAGELQQMMVECSKYHGQLTKEAAMGQGFDRHLFALRHLAAAKGIILPELYLDPAYGQINHNVLSTSTLSSPAVNLGGFAPVVSDGFGVGYAVHDNWIGCNVSSYPGRNAREFLQCVEKALEDMFDALEGKSIKS.

The transit peptide at 1 to 25 (MVPRLLLRAWPRGPAVGPGAPSRPL) directs the protein to the mitochondrion. Over 26-178 (SAGSGPGQYL…GLLEPEVFHL (153 aa)) the chain is Mitochondrial matrix. The residue at position 69 (Lys-69) is an N6-succinyllysine. The residue at position 79 (Lys-79) is an N6-acetyllysine. Lys-85 bears the N6-succinyllysine mark. An intramembrane region (note=Mitochondrial inner membrane) is located at residues 179 to 208 (NPAKSDTITFKRLIRFVPSSLSWYGAYLVN). The Mitochondrial matrix portion of the chain corresponds to 209–658 (AYPLDMSQYF…DALEGKSIKS (450 aa)). At Lys-239 the chain carries N6-acetyllysine; alternate. Lys-239 is subject to N6-succinyllysine; alternate. Lys-305 bears the N6-acetyllysine mark. His-372 serves as the catalytic Proton acceptor. An N6-succinyllysine mark is found at Lys-424 and Lys-439. 452 to 464 (GKEFLKKQKLSPD) is a CoA binding site. Residues Tyr-486, Ser-488, and Thr-499 each coordinate (R)-carnitine. N6-acetyllysine; alternate occurs at positions 510 and 544. Lys-510 and Lys-544 each carry N6-succinyllysine; alternate.

It belongs to the carnitine/choline acetyltransferase family.

It is found in the mitochondrion inner membrane. It carries out the reaction (R)-carnitine + hexadecanoyl-CoA = O-hexadecanoyl-(R)-carnitine + CoA. It catalyses the reaction octanoyl-CoA + (R)-carnitine = O-octanoyl-(R)-carnitine + CoA. The enzyme catalyses decanoyl-CoA + (R)-carnitine = O-decanoyl-(R)-carnitine + CoA. The catalysed reaction is dodecanoyl-CoA + (R)-carnitine = O-dodecanoyl-R-carnitine + CoA. It carries out the reaction tetradecanoyl-CoA + (R)-carnitine = O-tetradecanoyl-(R)-carnitine + CoA. It catalyses the reaction (R)-carnitine + octadecanoyl-CoA = O-octadecanoyl-(R)-carnitine + CoA. The enzyme catalyses eicosanoyl-CoA + (R)-carnitine = O-eicosanoyl-(R)-carnitine + CoA. The catalysed reaction is (9Z)-tetradecenoyl-CoA + (R)-carnitine = O-(9Z)-tetradecenoyl-(R)-carnitine + CoA. It carries out the reaction (5Z)-tetradecenoyl-CoA + (R)-carnitine = O-(5Z)-tetradecenoyl-(R)-carnitine + CoA. It catalyses the reaction (R)-carnitine + (9Z)-octadecenoyl-CoA = O-(9Z)-octadecenoyl-(R)-carnitine + CoA. The enzyme catalyses 4,8-dimethylnonanoyl-CoA + (R)-carnitine = O-4,8-dimethylnonanoyl-(R)-carnitine + CoA. Its pathway is lipid metabolism; fatty acid beta-oxidation. Inhibited by trans-2-hexadecanoyl-CoA. Involved in the intramitochondrial synthesis of acylcarnitines from accumulated acyl-CoA metabolites. Reconverts acylcarnitines back into the respective acyl-CoA esters that can then undergo beta-oxidation, an essential step for the mitochondrial uptake of long-chain fatty acids and their subsequent beta-oxidation in the mitochondrion. Active with medium (C8-C12) and long-chain (C14-C18) acyl-CoA esters. This Homo sapiens (Human) protein is Carnitine O-palmitoyltransferase 2, mitochondrial.